The sequence spans 410 residues: Magnesium transporter NIPA3 (410 aa).

At 1–67 (MGAQVRLPPG…ISANVENKYS (67 aa)) the chain is on the extracellular side. N-linked (GlcNAc...) asparagine glycans are attached at residues asparagine 25, asparagine 35, and asparagine 50. A helical transmembrane segment spans residues 68-88 (LYVGLVLAVSSSIFIGSSFIL). Residues 89-114 (KKKGLLQLASKGITRAGQGGHSYLKE) lie on the Cytoplasmic side of the membrane. Residues 115–135 (WLWWVGLLSMGVGEAANFAAY) traverse the membrane as a helical segment. A topological domain (extracellular) is located at residue alanine 136. The chain crosses the membrane as a helical span at residues 137-157 (FAPATLVTPLGALSVLISAIL). Topologically, residues 158–165 (SSYFLNEH) are cytoplasmic. Residues 166 to 186 (LNIHGKIGCILSILGSTVMVI) form a helical membrane-spanning segment. Residues 187 to 207 (HAPQEEEVTSLHEMEMKLRDP) are Extracellular-facing. The chain crosses the membrane as a helical span at residues 208–228 (GFISFAVIVTVISLVLILIVA). The Cytoplasmic portion of the chain corresponds to 229-233 (PKKGQ). The chain crosses the membrane as a helical span at residues 234–254 (TNILVYISICSLIGAFSVSSV). Residues 255-273 (KGLGIAIKELIEWKPVYKH) lie on the Extracellular side of the membrane. A helical transmembrane segment spans residues 274-294 (PLVFVLLAVLVLSVTTQINYL). Residues 295–304 (NKALDTFNTS) are Cytoplasmic-facing. A helical transmembrane segment spans residues 305-325 (IVTPIYYVFFTSMVVTCSAIL). Topologically, residues 326–336 (FQEWYGMTAGD) are extracellular. Residues 337 to 357 (IIGTLSGFFTIIIGIFLLHAF) traverse the membrane as a helical segment. At 358 to 410 (KNTDITWSELTSTAKKEAVSLNVSENNYVLLENLECSAPGYNDDVTLFSRTDD) the chain is on the cytoplasmic side.

Belongs to the NIPA family.

It localises to the golgi apparatus membrane. It catalyses the reaction Mg(2+)(in) = Mg(2+)(out). Its function is as follows. Acts as a Mg(2+) transporter. Can also transport other divalent cations such as Fe(2+), Sr(2+), Ba(2+), Mn(2+), Cu(2+) and Co(2+) but to a much less extent than Mg(2+). This Pongo abelii (Sumatran orangutan) protein is Magnesium transporter NIPA3 (NIPAL1).